A 315-amino-acid polypeptide reads, in one-letter code: Ribosomal RNA small subunit methyltransferase H (315 aa).

Residues Ala-35–His-37, Asp-55, Phe-84, Asp-105, and Gln-112 contribute to the S-adenosyl-L-methionine site.

Belongs to the methyltransferase superfamily. RsmH family.

Its subcellular location is the cytoplasm. It carries out the reaction cytidine(1402) in 16S rRNA + S-adenosyl-L-methionine = N(4)-methylcytidine(1402) in 16S rRNA + S-adenosyl-L-homocysteine + H(+). Specifically methylates the N4 position of cytidine in position 1402 (C1402) of 16S rRNA. This Streptococcus agalactiae serotype III (strain NEM316) protein is Ribosomal RNA small subunit methyltransferase H.